The chain runs to 226 residues: UPF0758 protein SAK_1186 (226 aa).

One can recognise an MPN domain in the interval 103–225 (QILSSEQLAR…YYSFREEADI (123 aa)). The Zn(2+) site is built by histidine 174, histidine 176, and aspartate 187. The JAMM motif signature appears at 174 to 187 (HNHPSGSPKPSESD).

It belongs to the UPF0758 family.

The protein is UPF0758 protein SAK_1186 of Streptococcus agalactiae serotype Ia (strain ATCC 27591 / A909 / CDC SS700).